A 785-amino-acid polypeptide reads, in one-letter code: Endonuclease MutS2 (785 aa).

An ATP-binding site is contributed by 335 to 342 (GPNTGGKT). One can recognise a Smr domain in the interval 710–785 (LDLRGERYED…GNGVTIVEFK (76 aa)).

This sequence belongs to the DNA mismatch repair MutS family. MutS2 subfamily. Homodimer. Binds to stalled ribosomes, contacting rRNA.

In terms of biological role, endonuclease that is involved in the suppression of homologous recombination and thus may have a key role in the control of bacterial genetic diversity. Acts as a ribosome collision sensor, splitting the ribosome into its 2 subunits. Detects stalled/collided 70S ribosomes which it binds and splits by an ATP-hydrolysis driven conformational change. Acts upstream of the ribosome quality control system (RQC), a ribosome-associated complex that mediates the extraction of incompletely synthesized nascent chains from stalled ribosomes and their subsequent degradation. Probably generates substrates for RQC. The chain is Endonuclease MutS2 from Listeria monocytogenes serotype 4b (strain F2365).